The chain runs to 66 residues: UPF0391 membrane protein AM1_5042 (66 aa).

Helical transmembrane passes span 4–24 (LTLTFLVVALIAAFLGFSGIA) and 28–47 (AAIAKILFCIFIVCFILVWP).

It belongs to the UPF0391 family.

Its subcellular location is the cell membrane. This chain is UPF0391 membrane protein AM1_5042, found in Acaryochloris marina (strain MBIC 11017).